The following is a 262-amino-acid chain: Ribose-5-phosphate isomerase A (262 aa).

Substrate is bound by residues 33-36, 89-92, and 102-105; these read TGST, DGAD, and KGGG. Catalysis depends on Glu111, which acts as the Proton acceptor. Lys129 contacts substrate.

This sequence belongs to the ribose 5-phosphate isomerase family. As to quaternary structure, homodimer.

The enzyme catalyses aldehydo-D-ribose 5-phosphate = D-ribulose 5-phosphate. It functions in the pathway carbohydrate degradation; pentose phosphate pathway; D-ribose 5-phosphate from D-ribulose 5-phosphate (non-oxidative stage): step 1/1. In terms of biological role, catalyzes the reversible conversion of ribose-5-phosphate to ribulose 5-phosphate. This chain is Ribose-5-phosphate isomerase A, found in Ruegeria pomeroyi (strain ATCC 700808 / DSM 15171 / DSS-3) (Silicibacter pomeroyi).